A 176-amino-acid chain; its full sequence is MTNIRKSHPLIKIINDAFIDLPAPSNISSWWNFGSLLGVCLAVQILTGLFLAMHYTSDTATAFNSVTHICRDVNYGWLLRYLHANGASMFFICLYLHVGRGLYYGSYTYTETWNVGIILLFAVMATAFMGYVLPWGQMSFWGATVITNLLFAIPYIGTDLVEWIWGGFSVDKATLT.

A run of 3 helical transmembrane segments spans residues 33–53 (FGSL…FLAM), 77–98 (WLLR…YLHV), and 113–133 (WNVG…GYVL). Positions 83 and 97 each coordinate heme b.

It belongs to the cytochrome b family. In terms of assembly, the cytochrome bc1 complex contains 11 subunits: 3 respiratory subunits (MT-CYB, CYC1 and UQCRFS1), 2 core proteins (UQCRC1 and UQCRC2) and 6 low-molecular weight proteins (UQCRH/QCR6, UQCRB/QCR7, UQCRQ/QCR8, UQCR10/QCR9, UQCR11/QCR10 and a cleavage product of UQCRFS1). This cytochrome bc1 complex then forms a dimer. Heme b is required as a cofactor.

Its subcellular location is the mitochondrion inner membrane. Its function is as follows. Component of the ubiquinol-cytochrome c reductase complex (complex III or cytochrome b-c1 complex) that is part of the mitochondrial respiratory chain. The b-c1 complex mediates electron transfer from ubiquinol to cytochrome c. Contributes to the generation of a proton gradient across the mitochondrial membrane that is then used for ATP synthesis. The sequence is that of Cytochrome b (MT-CYB) from Tadarida brasiliensis (Brazilian free-tailed bat).